The chain runs to 100 residues: Urease subunit gamma (100 aa).

The protein belongs to the urease gamma subunit family. In terms of assembly, heterotrimer of UreA (gamma), UreB (beta) and UreC (alpha) subunits. Three heterotrimers associate to form the active enzyme.

Its subcellular location is the cytoplasm. The enzyme catalyses urea + 2 H2O + H(+) = hydrogencarbonate + 2 NH4(+). The protein operates within nitrogen metabolism; urea degradation; CO(2) and NH(3) from urea (urease route): step 1/1. The protein is Urease subunit gamma of Arthrobacter sp. (strain FB24).